The primary structure comprises 180 residues: Ribosome-recycling factor (180 aa).

The protein belongs to the RRF family.

It localises to the cytoplasm. Responsible for the release of ribosomes from messenger RNA at the termination of protein biosynthesis. May increase the efficiency of translation by recycling ribosomes from one round of translation to another. In Chlamydia felis (strain Fe/C-56) (Chlamydophila felis), this protein is Ribosome-recycling factor.